A 267-amino-acid chain; its full sequence is Neutrophil elastase (267 aa).

The signal sequence occupies residues 1-27 (MTLGRRLACLFLACVLPALLLGGTALA). Positions 28 to 29 (SE) are excised as a propeptide. The Peptidase S1 domain maps to 30–247 (IVGGRRARPH…FVNWIDSIIQ (218 aa)). Cysteine 55 and cysteine 71 are oxidised to a cystine. Histidine 70 (charge relay system) is an active-site residue. N-linked (GlcNAc...) asparagine glycosylation is present at asparagine 88. The active-site Charge relay system is aspartate 117. N-linked (GlcNAc...) asparagine glycans are attached at residues asparagine 124 and asparagine 173. 3 disulfides stabilise this stretch: cysteine 151–cysteine 208, cysteine 181–cysteine 187, and cysteine 198–cysteine 223. Serine 202 (charge relay system) is an active-site residue.

The protein belongs to the peptidase S1 family. Elastase subfamily. Interacts with NOTCH2NL. Interacts with agaphelin, an antihemostatic protein from Anopheles gambiae. In terms of tissue distribution, bone marrow cells. Neutrophil.

Its subcellular location is the cytoplasmic vesicle. The protein localises to the phagosome. It catalyses the reaction Hydrolysis of proteins, including elastin. Preferential cleavage: Val-|-Xaa &gt; Ala-|-Xaa.. Functionally, serine protease that modifies the functions of natural killer cells, monocytes and granulocytes. Inhibits C5a-dependent neutrophil enzyme release and chemotaxis. Promotes cleavage of GSDMB, thereby inhibiting pyroptosis. Promotes blood coagulation. Through the activation of the platelet fibrinogen receptor integrin alpha-IIb/beta-3, potentiates platelet aggregation induced by a threshold concentration of cathepsin G (CTSG). Cleaves and thus inactivates tissue factor pathway inhibitor (TFPI). Capable of killing E.coli but not S.aureus in vitro; digests outer membrane protein A (ompA) in E.coli and K.pneumoniae. The protein is Neutrophil elastase (ELANE) of Homo sapiens (Human).